We begin with the raw amino-acid sequence, 146 residues long: Cystatin-C (146 aa).

Positions 1 to 26 (MAGPLRAPLLLLAILAVALAVSPAAG) are cleaved as a signal peptide. Ser43 is modified (phosphoserine; by FAM20C). The Secondary area of contact signature appears at 81-85 (QIVAG). Disulfide bonds link Cys99-Cys109 and Cys123-Cys143.

This sequence belongs to the cystatin family. In terms of assembly, homodimer. In terms of processing, the Thr-25 variant is O-glycosylated with a core 1 or possibly core 8 glycan. The signal peptide of the O-glycosylated Thr-25 variant is cleaved between Ala-20 and Val-21. In terms of tissue distribution, expressed in submandibular and sublingual saliva but not in parotid saliva (at protein level). Expressed in various body fluids, such as the cerebrospinal fluid and plasma. Expressed in highest levels in the epididymis, vas deferens, brain, thymus, and ovary and the lowest in the submandibular gland.

It localises to the secreted. Functionally, as an inhibitor of cysteine proteinases, this protein is thought to serve an important physiological role as a local regulator of this enzyme activity. This chain is Cystatin-C (CST3), found in Homo sapiens (Human).